A 269-amino-acid polypeptide reads, in one-letter code: MEKKIGFIGCGNMGKAILGGLIASGQVLPGQIWVYTPSPDKVAALHDQFGINAAESAQEVAQIADIIFAAVKPGIMIKVLSEITSSLNKDSLVVSIAAGVTLDQLARALGHDRKIIRAMPNTPALVNAGMTSVTPNALVTPEDTADVLNIFRCFGEAEVIAEPMIHPVVGVSGSSPAYVFMFIEAMADAAVLGGMPRAQAYKFAAQAVMGSAKMVLETGEHPGALKDMVCSPGGTTIEAVRVLEEKGFRAAVIEAMTKCMEKSEKLSKS.

It belongs to the pyrroline-5-carboxylate reductase family.

It localises to the cytoplasm. It catalyses the reaction L-proline + NADP(+) = (S)-1-pyrroline-5-carboxylate + NADPH + 2 H(+). The catalysed reaction is L-proline + NAD(+) = (S)-1-pyrroline-5-carboxylate + NADH + 2 H(+). It functions in the pathway amino-acid biosynthesis; L-proline biosynthesis; L-proline from L-glutamate 5-semialdehyde: step 1/1. Its activity is regulated as follows. Inhibited by p-chloromercuribenzoate. Its function is as follows. Catalyzes the reduction of 1-pyrroline-5-carboxylate (PCA) to L-proline. Does not catalyze the reverse reaction. In Escherichia coli (strain K12), this protein is Pyrroline-5-carboxylate reductase.